The chain runs to 72 residues: UPF0270 protein ESA_04379 (72 aa).

The protein belongs to the UPF0270 family.

The protein is UPF0270 protein ESA_04379 of Cronobacter sakazakii (strain ATCC BAA-894) (Enterobacter sakazakii).